We begin with the raw amino-acid sequence, 292 residues long: uncharacterized protein (292 aa).

The disordered stretch occupies residues E62–N81.

This is an uncharacterized protein from Homo sapiens (Human).